A 2524-amino-acid polypeptide reads, in one-letter code: Neurogenic locus notch homolog protein 1 (2524 aa).

The first 19 residues, 1–19 (MDRIGLAVLLCSLPVLTQG), serve as a signal peptide directing secretion. EGF-like domains lie at 20–57 (LRCT…ERCQ), 58–99 (FPNP…KVCL), 102–140 (VDNA…DSCQ), and 141–177 (QADP…ATCK). Topologically, residues 20-1729 (LRCTQTAEMC…METPKPSTLY (1710 aa)) are extracellular. Disulfide bonds link C22-C35, C29-C45, C47-C56, C62-C74, C68-C87, C89-C98, C106-C117, C111-C128, C130-C139, C145-C156, C150-C165, C167-C176, C183-C194, C188-C203, C205-C214, C221-C232, C226-C242, C244-C253, C260-C271, C265-C280, C282-C291, C298-C311, C305-C320, C322-C331, C338-C349, C343-C358, C360-C369, C375-C386, C380-C397, C399-C408, C415-C428, C422-C437, and C439-C448. An EGF-like 5; calcium-binding domain is found at 179-215 (DINECSQNPCKNGGQCINEFGSYRCTCQNRFTGRNCD). Residues 217–254 (PYVPCNPSPCLNGGTCRQTDDTSYDCTCLPGFSGQNCE) form the EGF-like 6 domain. Residue T231 is glycosylated (O-linked (Fuc...) threonine; alternate). O-linked (GalNAc...) threonine; alternate glycosylation is present at T231. Residues 256 to 292 (NIDDCPSNNCRNGGTCVDGVNTYNCQCPPDWTGQYCT) form the EGF-like 7; calcium-binding domain. Residues 294-332 (DVDECQLMPNACQNGGTCHNTYGGYNCVCVNGWTGEDCS) form the EGF-like 8; calcium-binding domain. The EGF-like 9; calcium-binding domain maps to 334 to 370 (NIDDCANAACHSGATCHDRVASFYCECPHGRTGLLCH). The EGF-like 10 domain occupies 371-409 (LDNACISNPCNEGSNCDTNPVNGKAICTCPPGYTGPACN). An EGF-like 11; calcium-binding domain is found at 411 to 449 (DVDECSLGANPCEHGGRCTNTLGSFQCNCPQGYAGPRCE). Residues T431 and S434 each contribute to the Ca(2+) site. S434 carries O-linked (Glc...) serine glycosylation. Ca(2+) is bound by residues D451, V452, and E454. One can recognise an EGF-like 12; calcium-binding domain in the interval 451-487 (DVNECLSNPCQNDSTCLDQIGEFQCICMPGYEGLYCE). 3 cysteine pairs are disulfide-bonded: C455-C466, C460-C475, and C477-C486. A glycan (O-linked (Glc...) serine) is linked at S457. An N-linked (GlcNAc...) asparagine glycan is attached at N462. O-linked (Fuc...) threonine glycosylation is present at T465. Ca(2+) contacts are provided by D468 and Q469. The Ca(2+) site is built by N489, I490, and E492. The EGF-like 13; calcium-binding domain occupies 489-525 (NIDECASNPCLHNGKCIDKINEFRCDCPTGFSGNLCQ). Disulfide bonds link C493–C504, C498–C513, C515–C524, C531–C542, C536–C551, C553–C562, C569–C579, C574–C588, C590–C599, C606–C617, C611–C626, C628–C637, C644–C654, C649–C663, C665–C674, C681–C692, C686–C701, C703–C712, C719–C729, C724–C738, C740–C749, C756–C767, C761–C776, C778–C787, C794–C805, C799–C814, C816–C825, C832–C843, C837–C854, C856–C865, C872–C883, C877–C892, C894–C903, C910–C921, C915–C930, C932–C941, C948–C959, C953–C968, C970–C979, C986–C997, C991–C1006, C1008–C1017, C1024–C1035, C1029–C1044, C1046–C1055, C1062–C1073, C1067–C1082, C1084–C1093, C1100–C1121, C1115–C1130, C1132–C1141, C1148–C1159, C1153–C1168, C1170–C1179, C1186–C1197, C1191–C1206, C1208–C1217, C1224–C1243, C1237–C1252, C1254–C1263, C1270–C1283, C1275–C1292, C1294–C1303, C1310–C1321, C1315–C1333, C1335–C1344, C1351–C1362, C1356–C1371, C1373–C1382, C1390–C1401, C1395–C1412, C1414–C1423, C1447–C1470, C1452–C1465, and C1461–C1477. S495 carries an O-linked (Glc...) serine glycan. Ca(2+)-binding residues include D506 and K507. The region spanning 527–563 (DFDECTSTPCKNGAKCLDGPNSYTCQCTEGFTGRHCE) is the EGF-like 14; calcium-binding domain. The EGF-like 15; calcium-binding domain occupies 565 to 600 (DINECIPDPCHYGTCKDGIATFTCLCRPGYTGRLCD). Positions 602–638 (DINECLSKPCLNGGQCTDRENGYICTCPKGTTGVNCE) constitute an EGF-like 16; calcium-binding domain. The EGF-like 17 domain occupies 640–675 (KIDDCASNLCDNGKCIDKIDGYECTCEPGYTGKLCN). Residues 677–713 (NINECDSNPCRNGGTCKDQINGFTCVCPDGYHDHMCL) form the EGF-like 18; calcium-binding domain. Residues 715 to 750 (EVNECNSNPCIHGACHDGVNGYKCDCEAGWSGSNCD) form the EGF-like 19; calcium-binding domain. Residues 752-788 (NNNECESNPCMNGGTCKDMTGAYICTCKAGFSGPNCQ) enclose the EGF-like 20; calcium-binding domain. The EGF-like 21; calcium-binding domain maps to 790 to 826 (NINECSSNPCLNHGTCIDDVAGYKCNCMLPYTGAICE). The region spanning 828-866 (VLAPCAGSPCKNGGRCKESEDFETFSCECPPGWQGQTCE) is the EGF-like 22 domain. The 37-residue stretch at 868–904 (DMNECVNRPCRNGATCQNTNGSYKCNCKPGYTGRNCE) folds into the EGF-like 23; calcium-binding domain. An N-linked (GlcNAc...) asparagine glycan is attached at N887. The EGF-like 24; calcium-binding domain maps to 906-942 (DIDDCQPNPCHNGGSCSDGINMFFCNCPAGFRGPKCE). One can recognise an EGF-like 25; calcium-binding domain in the interval 944–980 (DINECASNPCKNGANCTDCVNSYTCTCQPGFSGIHCE). N-linked (GlcNAc...) asparagine glycosylation is present at N958. An EGF-like 26 domain is found at 982-1018 (NTPDCTESSCFNGGTCIDGINTFTCQCPPGFTGSYCQ). An EGF-like 27; calcium-binding domain is found at 1020–1056 (DINECDSKPCLNGGTCQDSYGTYKCTCPQGYTGLNCQ). EGF-like domains lie at 1058 to 1094 (LVRW…VYCD) and 1096 to 1142 (PSVS…SYCE). The EGF-like 30; calcium-binding domain maps to 1144–1180 (QVDECSPNPCQNGATCTDYLGGYSCECVAGYHGVNCS). N-linked (GlcNAc...) asparagine glycosylation occurs at N1178. The EGF-like 31; calcium-binding domain maps to 1182–1218 (EINECLSHPCQNGGTCIDLINTYKCSCPRGTQGVHCE). The 45-residue stretch at 1220–1264 (NVDDCTPFYDSFTLEPKCFNNGKCIDRVGGYNCICPPGFVGERCE) folds into the EGF-like 32; calcium-binding domain. EGF-like domains follow at residues 1266-1304 (DVNE…RRCE), 1306-1346 (VVDG…TCEY), 1347-1383 (DSRT…ATCQ), and 1386-1424 (VISP…LFCH). T1400 carries O-linked (Fuc...) threonine; alternate glycosylation. T1400 carries O-linked (GalNAc...) threonine; alternate glycosylation. 3 LNR repeats span residues 1447–1487 (CENE…PWKN), 1488–1529 (CTQS…CNPL), and 1530–1564 (YDQY…NMPE). A glycan (N-linked (GlcNAc...) asparagine) is linked at N1487. 5 disulfide bridges follow: C1488/C1512, C1494/C1507, C1503/C1519, C1534/C1547, and C1543/C1559. The N-linked (GlcNAc...) asparagine glycan is linked to N1508. An N-linked (GlcNAc...) asparagine glycan is attached at N1584. A helical membrane pass occupies residues 1730–1750 (PMLSMLVIPLLIIFVFMMVIV). Residues 1751 to 2524 (NKKRRREHGQ…QRTHIPEAFK (774 aa)) lie on the Cytoplasmic side of the membrane. ANK repeat units follow at residues 1876 to 1919 (DGFT…QLHN), 1924 to 1953 (TGET…DANV), 1957 to 1987 (MGRT…DLDA), 1991 to 2020 (DGTT…DVNA), 2024 to 2053 (FGKS…NKDM), and 2057 to 2086 (KEET…NRDI). Disordered regions lie at residues 2144–2230 (NMKP…LNHL), 2369–2407 (MQAQ…FCSS), and 2451–2524 (LTPP…EAFK). Composition is skewed to polar residues over residues 2180–2192 (GKTT…SSGV) and 2208–2230 (DVSS…LNHL). A compositionally biased stretch (low complexity) spans 2369–2394 (MQAQQMQQQQNLQLHQSMQQQHHNSS). Composition is skewed to polar residues over residues 2395-2407 (TTST…FCSS) and 2451-2471 (LTPP…SHQL). Residues 2481–2496 (PSPESPDQWSSSSPHS) are compositionally biased toward low complexity. Polar residues predominate over residues 2497–2516 (NMSDWSEGISSPPTSMQPQR).

It belongs to the NOTCH family. Forms a ternary complex with nrarp and rbpj/suh. O-glycosylated on the EGF-like domains. Contains both O-linked fucose and O-linked glucose. O-linked glycosylation by galnt11 is involved in determination of left/right symmetry: glycosylation promotes activation of notch1, possibly by promoting cleavage by adam17, modulating the balance between motile and immotile (sensory) cilia at the left-right organiser (LRO). In terms of processing, synthesized in the endoplasmic reticulum as an inactive form which is proteolytically cleaved by a furin-like convertase in the trans-Golgi network before it reaches the plasma membrane to yield an active, ligand-accessible form. Cleavage results in a C-terminal fragment N(TM) and a N-terminal fragment N(EC). Following ligand binding, it is cleaved by adam17 to yield a membrane-associated intermediate fragment called notch extracellular truncation (NEXT). Following endocytosis, this fragment is then cleaved by presenilin dependent gamma-secretase to release a Notch-derived peptide containing the intracellular domain (NICD) from the membrane.

Its subcellular location is the cell membrane. It localises to the nucleus. In terms of biological role, functions as a receptor for membrane-bound ligands Jagged-1 (JAG1), Jagged-2 (JAG2) and Delta-1 (DLL1) to regulate cell-fate determination. Upon ligand activation through the released notch intracellular domain (NICD) it forms a transcriptional activator complex with RBPJ/RBPSUH and activates genes of the enhancer of split locus. Affects the implementation of differentiation, proliferation and apoptotic programs. Involved in angiogenesis; negatively regulates endothelial cell proliferation and migration and angiogenic sprouting. Involved in the maturation of both CD4(+) and CD8(+) cells in the thymus. Important for follicular differentiation and possibly cell fate selection within the follicle. During cerebellar development, functions as a receptor for neuronal DNER and is involved in the differentiation of Bergmann glia. Represses neuronal and myogenic differentiation. May play an essential role in postimplantation development, probably in some aspect of cell specification and/or differentiation. May be involved in mesoderm development, somite formation and neurogenesis. Involved in determination of left/right symmetry by modulating the balance between motile and immotile (sensory) cilia at the left-right organiser (LRO). This chain is Neurogenic locus notch homolog protein 1 (notch1), found in Xenopus laevis (African clawed frog).